A 175-amino-acid chain; its full sequence is General stress protein 14 (175 aa).

It belongs to the NAD(P)H dehydrogenase (quinone) family.

The protein is General stress protein 14 (ywrO) of Bacillus subtilis (strain 168).